Reading from the N-terminus, the 206-residue chain is dITP/XTP pyrophosphatase (206 aa).

7-12 (TSNKDK) is a substrate binding site. Catalysis depends on Asp74, which acts as the Proton acceptor. Residue Asp74 participates in Mg(2+) binding. Residues Ser75, 159–162 (FGYD), Lys182, and 187–188 (HR) contribute to the substrate site.

It belongs to the HAM1 NTPase family. As to quaternary structure, homodimer. The cofactor is Mg(2+).

The enzyme catalyses XTP + H2O = XMP + diphosphate + H(+). It catalyses the reaction dITP + H2O = dIMP + diphosphate + H(+). The catalysed reaction is ITP + H2O = IMP + diphosphate + H(+). Its function is as follows. Pyrophosphatase that catalyzes the hydrolysis of nucleoside triphosphates to their monophosphate derivatives, with a high preference for the non-canonical purine nucleotides XTP (xanthosine triphosphate), dITP (deoxyinosine triphosphate) and ITP. Seems to function as a house-cleaning enzyme that removes non-canonical purine nucleotides from the nucleotide pool, thus preventing their incorporation into DNA/RNA and avoiding chromosomal lesions. This chain is dITP/XTP pyrophosphatase, found in Campylobacter hominis (strain ATCC BAA-381 / DSM 21671 / CCUG 45161 / LMG 19568 / NCTC 13146 / CH001A).